The following is a 305-amino-acid chain: Ornithine carbamoyltransferase (305 aa).

Residues 53–56 (STRT), glutamine 80, arginine 104, and 131–134 (HPCQ) contribute to the carbamoyl phosphate site. Residues asparagine 162, aspartate 219, and 223-224 (SM) contribute to the L-ornithine site. Carbamoyl phosphate contacts are provided by residues 259–260 (CL) and arginine 287.

It belongs to the aspartate/ornithine carbamoyltransferase superfamily. OTCase family.

Its subcellular location is the cytoplasm. The catalysed reaction is carbamoyl phosphate + L-ornithine = L-citrulline + phosphate + H(+). It participates in amino-acid biosynthesis; L-arginine biosynthesis; L-arginine from L-ornithine and carbamoyl phosphate: step 1/3. Its function is as follows. Reversibly catalyzes the transfer of the carbamoyl group from carbamoyl phosphate (CP) to the N(epsilon) atom of ornithine (ORN) to produce L-citrulline. The polypeptide is Ornithine carbamoyltransferase (Psychrobacter cryohalolentis (strain ATCC BAA-1226 / DSM 17306 / VKM B-2378 / K5)).